Reading from the N-terminus, the 270-residue chain is Putative phosphoenolpyruvate synthase regulatory protein (270 aa).

150–157 (GVSRCGKT) serves as a coordination point for ADP.

The protein belongs to the pyruvate, phosphate/water dikinase regulatory protein family. PSRP subfamily.

It catalyses the reaction [pyruvate, water dikinase] + ADP = [pyruvate, water dikinase]-phosphate + AMP + H(+). The enzyme catalyses [pyruvate, water dikinase]-phosphate + phosphate + H(+) = [pyruvate, water dikinase] + diphosphate. Bifunctional serine/threonine kinase and phosphorylase involved in the regulation of the phosphoenolpyruvate synthase (PEPS) by catalyzing its phosphorylation/dephosphorylation. The sequence is that of Putative phosphoenolpyruvate synthase regulatory protein from Shewanella oneidensis (strain ATCC 700550 / JCM 31522 / CIP 106686 / LMG 19005 / NCIMB 14063 / MR-1).